Here is a 413-residue protein sequence, read N- to C-terminus: Multifunctional CCA protein (413 aa).

Positions 8 and 11 each coordinate ATP. 2 residues coordinate CTP: G8 and R11. Mg(2+) contacts are provided by D21 and D23. Residues R91, R137, and R140 each contribute to the ATP site. The CTP site is built by R91, R137, and R140. One can recognise an HD domain in the interval 228–329 (TGVHTLMTLS…VKLFDAIDAW (102 aa)).

It belongs to the tRNA nucleotidyltransferase/poly(A) polymerase family. Bacterial CCA-adding enzyme type 1 subfamily. Monomer. Can also form homodimers and oligomers. The cofactor is Mg(2+). Ni(2+) is required as a cofactor.

It carries out the reaction a tRNA precursor + 2 CTP + ATP = a tRNA with a 3' CCA end + 3 diphosphate. It catalyses the reaction a tRNA with a 3' CCA end + 2 CTP + ATP = a tRNA with a 3' CCACCA end + 3 diphosphate. Catalyzes the addition and repair of the essential 3'-terminal CCA sequence in tRNAs without using a nucleic acid template. Adds these three nucleotides in the order of C, C, and A to the tRNA nucleotide-73, using CTP and ATP as substrates and producing inorganic pyrophosphate. tRNA 3'-terminal CCA addition is required both for tRNA processing and repair. Also involved in tRNA surveillance by mediating tandem CCA addition to generate a CCACCA at the 3' terminus of unstable tRNAs. While stable tRNAs receive only 3'-terminal CCA, unstable tRNAs are marked with CCACCA and rapidly degraded. The protein is Multifunctional CCA protein of Salmonella agona (strain SL483).